The sequence spans 116 residues: Putative pterin-4-alpha-carbinolamine dehydratase (116 aa).

This sequence belongs to the pterin-4-alpha-carbinolamine dehydratase family.

The catalysed reaction is (4aS,6R)-4a-hydroxy-L-erythro-5,6,7,8-tetrahydrobiopterin = (6R)-L-erythro-6,7-dihydrobiopterin + H2O. In Stenotrophomonas maltophilia (strain K279a), this protein is Putative pterin-4-alpha-carbinolamine dehydratase.